Reading from the N-terminus, the 122-residue chain is Ribosome-binding factor A (122 aa).

It belongs to the RbfA family. As to quaternary structure, monomer. Binds 30S ribosomal subunits, but not 50S ribosomal subunits or 70S ribosomes.

The protein localises to the cytoplasm. One of several proteins that assist in the late maturation steps of the functional core of the 30S ribosomal subunit. Associates with free 30S ribosomal subunits (but not with 30S subunits that are part of 70S ribosomes or polysomes). Required for efficient processing of 16S rRNA. May interact with the 5'-terminal helix region of 16S rRNA. The sequence is that of Ribosome-binding factor A from Polaromonas naphthalenivorans (strain CJ2).